The following is a 348-amino-acid chain: N-acetyl-gamma-glutamyl-phosphate reductase (348 aa).

Cysteine 151 is an active-site residue.

It belongs to the NAGSA dehydrogenase family. Type 1 subfamily.

It localises to the cytoplasm. The enzyme catalyses N-acetyl-L-glutamate 5-semialdehyde + phosphate + NADP(+) = N-acetyl-L-glutamyl 5-phosphate + NADPH + H(+). It functions in the pathway amino-acid biosynthesis; L-arginine biosynthesis; N(2)-acetyl-L-ornithine from L-glutamate: step 3/4. Functionally, catalyzes the NADPH-dependent reduction of N-acetyl-5-glutamyl phosphate to yield N-acetyl-L-glutamate 5-semialdehyde. This Lachnospira eligens (strain ATCC 27750 / DSM 3376 / VPI C15-48 / C15-B4) (Eubacterium eligens) protein is N-acetyl-gamma-glutamyl-phosphate reductase.